Here is a 213-residue protein sequence, read N- to C-terminus: Uridine kinase (213 aa).

ATP is bound at residue 14–21 (GASASGKS).

It belongs to the uridine kinase family.

The protein localises to the cytoplasm. It catalyses the reaction uridine + ATP = UMP + ADP + H(+). The catalysed reaction is cytidine + ATP = CMP + ADP + H(+). It functions in the pathway pyrimidine metabolism; CTP biosynthesis via salvage pathway; CTP from cytidine: step 1/3. The protein operates within pyrimidine metabolism; UMP biosynthesis via salvage pathway; UMP from uridine: step 1/1. The protein is Uridine kinase of Vibrio campbellii (strain ATCC BAA-1116).